Reading from the N-terminus, the 105-residue chain is Small ribosomal subunit protein uS10 (105 aa).

This sequence belongs to the universal ribosomal protein uS10 family. As to quaternary structure, part of the 30S ribosomal subunit.

In terms of biological role, involved in the binding of tRNA to the ribosomes. The protein is Small ribosomal subunit protein uS10 of Trichodesmium erythraeum (strain IMS101).